Consider the following 301-residue polypeptide: Protoheme IX farnesyltransferase (301 aa).

9 helical membrane passes run 20–42 (FTEL…GMWL), 55–75 (VDVI…SGAF), 105–125 (ALMV…MTTW), 126–146 (QAGV…SLYA), 150–172 (LVSN…WFAV), 176–198 (FSIV…FYAI), 227–247 (MFFW…LGIV), 249–269 (VVLA…GFKM), and 280–300 (FVYS…ISIF).

It belongs to the UbiA prenyltransferase family. Protoheme IX farnesyltransferase subfamily. In terms of assembly, interacts with CtaA.

It localises to the cell membrane. It catalyses the reaction heme b + (2E,6E)-farnesyl diphosphate + H2O = Fe(II)-heme o + diphosphate. Its pathway is porphyrin-containing compound metabolism; heme O biosynthesis; heme O from protoheme: step 1/1. Functionally, converts heme B (protoheme IX) to heme O by substitution of the vinyl group on carbon 2 of heme B porphyrin ring with a hydroxyethyl farnesyl side group. The chain is Protoheme IX farnesyltransferase from Listeria monocytogenes serotype 4b (strain CLIP80459).